The sequence spans 316 residues: 2-phospho-L-lactate guanylyltransferase (316 aa).

The span at 72-85 (TGVSTEAVSTSTST) shows a compositional bias: low complexity. 2 disordered regions span residues 72–107 (TGVS…PTHT) and 119–138 (LRDD…DGDK). The segment covering 92-107 (HNAASDNYVSQSPTHT) has biased composition (polar residues).

This sequence belongs to the CofC family. As to quaternary structure, homodimer.

It carries out the reaction (2S)-2-phospholactate + GTP + H(+) = (2S)-lactyl-2-diphospho-5'-guanosine + diphosphate. It participates in cofactor biosynthesis; coenzyme F420 biosynthesis. Its function is as follows. Guanylyltransferase that catalyzes the activation of (2S)-2-phospholactate (2-PL) as (2S)-lactyl-2-diphospho-5'-guanosine, via the condensation of 2-PL with GTP. It is involved in the biosynthesis of coenzyme F420, a hydride carrier cofactor. This Haloquadratum walsbyi (strain DSM 16790 / HBSQ001) protein is 2-phospho-L-lactate guanylyltransferase.